A 450-amino-acid chain; its full sequence is Exodeoxyribonuclease 7 large subunit (450 aa).

This sequence belongs to the XseA family. In terms of assembly, heterooligomer composed of large and small subunits.

It localises to the cytoplasm. It catalyses the reaction Exonucleolytic cleavage in either 5'- to 3'- or 3'- to 5'-direction to yield nucleoside 5'-phosphates.. Bidirectionally degrades single-stranded DNA into large acid-insoluble oligonucleotides, which are then degraded further into small acid-soluble oligonucleotides. The sequence is that of Exodeoxyribonuclease 7 large subunit from Shewanella frigidimarina (strain NCIMB 400).